A 432-amino-acid polypeptide reads, in one-letter code: Probable M18 family aminopeptidase 2 (432 aa).

Zn(2+)-binding residues include H86, H157, and H408.

This sequence belongs to the peptidase M18 family. The cofactor is Zn(2+).

The polypeptide is Probable M18 family aminopeptidase 2 (apeB) (Streptomyces coelicolor (strain ATCC BAA-471 / A3(2) / M145)).